The sequence spans 46 residues: Viscotoxin-A2 (46 aa).

3 disulfides stabilise this stretch: Cys3/Cys40, Cys4/Cys32, and Cys16/Cys26.

The protein belongs to the plant thionin (TC 1.C.44) family.

The protein resides in the secreted. In terms of biological role, thionins are small plant proteins which are toxic to animal cells. They seem to exert their toxic effect at the level of the cell membrane. Their precise function is not known. This Viscum album (European mistletoe) protein is Viscotoxin-A2 (THI2.3).